Reading from the N-terminus, the 936-residue chain is VPS35 endosomal protein-sorting factor-like (936 aa).

2 disordered regions span residues serine 43–leucine 69 and aspartate 87–aspartate 113. Over residues lysine 51 to leucine 69 the composition is skewed to low complexity. The residue at position 265 (serine 265) is a Phosphoserine. A helical transmembrane segment spans residues alanine 672–phenylalanine 692.

This sequence belongs to the VPS35L family. As to quaternary structure, component of the heterotrimeric retriever complex formed by VPS26C, VPS29 and VPS35L. Interacts with VPS29. Interacts with COMMD1, CCDC93 and CCDC22; associates with the CCC (COMMD/CCDC22/CCDC93) complex which contains at least COMMD1 (and possibly other COMM domain-containing proteins), CCDC22 and CCDC93. Interacts with WASHC1, WASHC2A and WASHC2C. Interacts with SNX17 and SNX31.

The protein resides in the membrane. It localises to the endosome. Functionally, acts as a component of the retriever complex. The retriever complex is a heterotrimeric complex related to retromer cargo-selective complex (CSC) and essential for retromer-independent retrieval and recycling of numerous cargos such as integrin alpha-5/beta-1 (ITGA5:ITGB1). The recruitment of the retriever complex to the endosomal membrane involves CCC and WASH complexes. In the endosomes, drives the retrieval and recycling of NxxY-motif-containing cargo proteins by coupling to SNX17, a cargo essential for the homeostatic maintenance of numerous cell surface proteins associated with processes that include cell migration, cell adhesion, nutrient supply and cell signaling. Involved in copper-dependent ATP7A trafficking between the trans-Golgi network and vesicles in the cell periphery; the function is proposed to depend on its association with the CCC complex and cooperation with the WASH complex on early endosomes. Seems not to be required for CCC complex stability. The protein is VPS35 endosomal protein-sorting factor-like of Rattus norvegicus (Rat).